We begin with the raw amino-acid sequence, 696 residues long: UvrABC system protein B (696 aa).

Residues 45–434 (EGIGDGLSYQ…DEVVEQVVRP (390 aa)) enclose the Helicase ATP-binding domain. Residue 58–65 (GVTGSGKT) coordinates ATP. The short motif at 111-134 (YYDYYQPEAYVPQRDLFIEKDSSV) is the Beta-hairpin element. One can recognise a Helicase C-terminal domain in the interval 450 to 616 (QVDDLLSEIH…GVVKRIKDII (167 aa)). The UVR domain occupies 647–682 (GKEIKRLEKQMLDHAKNLEFEKAAAVRDQLAKLKSQ).

It belongs to the UvrB family. Forms a heterotetramer with UvrA during the search for lesions. Interacts with UvrC in an incision complex.

It is found in the cytoplasm. Functionally, the UvrABC repair system catalyzes the recognition and processing of DNA lesions. A damage recognition complex composed of 2 UvrA and 2 UvrB subunits scans DNA for abnormalities. Upon binding of the UvrA(2)B(2) complex to a putative damaged site, the DNA wraps around one UvrB monomer. DNA wrap is dependent on ATP binding by UvrB and probably causes local melting of the DNA helix, facilitating insertion of UvrB beta-hairpin between the DNA strands. Then UvrB probes one DNA strand for the presence of a lesion. If a lesion is found the UvrA subunits dissociate and the UvrB-DNA preincision complex is formed. This complex is subsequently bound by UvrC and the second UvrB is released. If no lesion is found, the DNA wraps around the other UvrB subunit that will check the other stand for damage. The sequence is that of UvrABC system protein B from Ralstonia nicotianae (strain ATCC BAA-1114 / GMI1000) (Ralstonia solanacearum).